A 492-amino-acid chain; its full sequence is MLLRTMAATSPRPPPSTSLTSQQPPSPPSQLPLRTMPGSYGWPLVGPLSDRLDYFWFQGPDKFFRTRAEKYKSTVFRTNIPPTFPFFGNVNPNIVAVLDVKSFSHLFDMDLVDKRDVLIGDFRPSLGFYGGVCVGVNLDTTEPKHAKIKGFAMETLKRSSKVWLQELRSNLNIFWGTIESEISKNGAASYIFPLQRCIFSFLCASLAGVDASVSPDIAENGWKTINTWLALQVIPTAKLGVVPQPLEEILLHTWPYPSLLIAGNYKKLYNFIDENAGDCLRLGQEEFRLTRDEAIQNLLFVLGFNAYGGFSVFLPSLIGRITGDNSGLQERIRTEVRRVCGSGSDLNFKTVNEMELVKSVVYETLRFNPPVPLQFARARKDFQISSHDAVFEVKKGELLCGYQPLVMRDANVFDEPEEFKPDRYVGETGSELLNYLYWSNGPQTGTPSASNKQCAAKDIVTLTASLLVADLFLRYDTITGDSGSIKAVVKAK.

The disordered stretch occupies residues M1–L33. The transit peptide at M1–R34 directs the protein to the chloroplast. C454 is a heme binding site.

Belongs to the cytochrome P450 family. Heme is required as a cofactor. In terms of tissue distribution, expressed in roots, leaves, flowers and siliques.

The protein localises to the plastid. It is found in the chloroplast. Catalyzes the conversion of (9Z,11E,15Z)-(13S)-hydroperoxyoctadeca-9,11,15-trienoate to (9Z)-12-oxo-dodec-9-enoate and cis-3-hexenal. Possesses low activity toward (9Z,11E)-(13S)-13-hydroperoxyoctadeca-9,11-dienoate. Required for the synthesis of the green leaf volatiles (GLVs) hexanal and trans-2-hexenal. This Arabidopsis thaliana (Mouse-ear cress) protein is Linolenate hydroperoxide lyase, chloroplastic.